Here is a 318-residue protein sequence, read N- to C-terminus: Pyrimidine-specific ribonucleoside hydrolase RihA (318 aa).

Histidine 240 is an active-site residue.

The protein belongs to the IUNH family. RihA subfamily.

Hydrolyzes cytidine or uridine to ribose and cytosine or uracil, respectively. This Shewanella sp. (strain ANA-3) protein is Pyrimidine-specific ribonucleoside hydrolase RihA.